The primary structure comprises 289 residues: CRISPR system Cms protein Csm4 (289 aa).

Belongs to the CRISPR-associated Csm4 family. In terms of assembly, probably part of the Csm effector complex, that includes Cas10, Csm2, Csm3, Csm4, Csm5 and mature crRNA. Interacts with Cas10 (csm1).

Its function is as follows. CRISPR (clustered regularly interspaced short palindromic repeat) is an adaptive immune system that provides protection against mobile genetic elements (viruses, transposable elements and conjugative plasmids). CRISPR clusters contain spacers, sequences complementary to antecedent mobile elements, and target invading nucleic acids. CRISPR clusters are transcribed and processed into CRISPR RNA (crRNA). The type III-A Csm effector complex binds crRNA and acts as a crRNA-guided RNase, DNase and cyclic oligoadenylate synthase; binding of target RNA cognate to the crRNA is required for all activities. The subunit probably binds to the 5' handle of the crRNA, helping in discrimination between self- and non-self. The polypeptide is CRISPR system Cms protein Csm4 (Thermococcus onnurineus (strain NA1)).